The primary structure comprises 351 residues: MSENGDCENQTSSGFPSIEQMLASSPGKTPISLLQEYGTRVGKTPVYDLLKAEGQAHQPNFTFRVSVGDINCTGQGPSKKAAKHKAAEVALSLLKGGDMFGMMCEENSVMLSVEQPVELREVADVSPPPTNRNHTIEMKPPLSAQQSECNPVGALQELVVQKGWRLPEYTVTQESGPAHRKEFTMTCRVERFLEIGSGTSKKLAKRNAAAKMLLQIHRVPAEHRESGETEPEEDQFSMGKLDGSRGRGTACTWDSLRNSSGEKILHLRSNPLTILSSGFCSLLQDLSEEQSFQISYLDIDEPSLSGLYQCLVELSTQPTTVCHGSATTRDAARANAAHNALQYLKIMAGGK.

Polar residues predominate over residues 1–15 (MSENGDCENQTSSGF). The disordered stretch occupies residues 1–22 (MSENGDCENQTSSGFPSIEQML). DRBM domains lie at 29–96 (TPIS…LLKG) and 150–218 (NPVG…QIHR). Residues 222–243 (EHRESGETEPEEDQFSMGKLDG) are disordered. Positions 278–346 (GFCSLLQDLS…AHNALQYLKI (69 aa)) constitute a DRBM 3 domain.

This sequence belongs to the TARBP2 family. Self-associates. Component of the RISC loading complex (RLC), or micro-RNA (miRNA) loading complex (miRLC), which is composed of dicer1, ago2 and tarbp2. Note that the trimeric RLC/miRLC is also referred to as RISC.

It localises to the cytoplasm. Functionally, required for formation of the RNA induced silencing complex (RISC). Component of the RISC loading complex (RLC), also known as the micro-RNA (miRNA) loading complex (miRLC), which is composed of dicer1, ago2 and tarbp2. Within the RLC/miRLC, dicer1 and tarbp2 are required to process precursor miRNAs (pre-miRNAs) to mature miRNAs and then load them onto ago2. ago2 bound to the mature miRNA constitutes the minimal RISC and may subsequently dissociate from dicer1 and tarbp2. May also play a role in the production of short interfering RNAs (siRNAs) from double-stranded RNA (dsRNA) by dicer1. This is RISC-loading complex subunit tarbp2 (tarbp2) from Xenopus tropicalis (Western clawed frog).